The sequence spans 390 residues: Heparan sulfate glucosamine 3-O-sulfotransferase 3B1 (390 aa).

The segment at 1–25 (MGQRLSGGRSCLDVPGRFLPQPPPP) is disordered. Topologically, residues 1 to 32 (MGQRLSGGRSCLDVPGRFLPQPPPPPPPVRRK) are cytoplasmic. A helical; Signal-anchor for type II membrane protein membrane pass occupies residues 33–53 (LALLFAMLCIWLYMFLYSCAG). At 54–390 (SCTAAPGLLL…QMTGRDFGWD (337 aa)) the chain is on the lumenal side. The interval 79–125 (TAPNETSPKMPFRAPPANSLAAGKDKTVGAGSQEEQSPEAPDSPSPI) is disordered. N-linked (GlcNAc...) asparagine glycosylation is present at Asn82. 147–151 (KGGTR) is a binding site for 3'-phosphoadenylyl sulfate. Residues 169–175 (EPHFFDR) and 200–203 (KTPS) each bind substrate. 2 residues coordinate 3'-phosphoadenylyl sulfate: Arg228 and Ser236. N-linked (GlcNAc...) asparagine glycosylation is present at Asn258. Residue 268-269 (WS) participates in substrate binding. N-linked (GlcNAc...) asparagine glycosylation is present at Asn329. A disulfide bond links Cys336 and Cys348. Residue 353-357 (KGRAH) participates in 3'-phosphoadenylyl sulfate binding.

Belongs to the sulfotransferase 1 family.

The protein resides in the golgi apparatus membrane. It carries out the reaction alpha-D-glucosaminyl-[heparan sulfate](n) + 3'-phosphoadenylyl sulfate = 3-sulfo-alpha-D-glucosaminyl-[heparan sulfate](n) + adenosine 3',5'-bisphosphate + H(+). Sulfotransferase that utilizes 3'-phospho-5'-adenylyl sulfate (PAPS) to catalyze the transfer of a sulfo group to an N-unsubstituted glucosamine linked to a 2-O-sulfo iduronic acid unit on heparan sulfate. Catalyzes the O-sulfation of glucosamine in IdoUA2S-GlcNS and also in IdoUA2S-GlcNH2. Unlike HS3ST1/3-OST-1, does not convert non-anticoagulant heparan sulfate to anticoagulant heparan sulfate. This Mus musculus (Mouse) protein is Heparan sulfate glucosamine 3-O-sulfotransferase 3B1 (Hs3st3b1).